We begin with the raw amino-acid sequence, 265 residues long: Thiamine thiazole synthase (265 aa).

Residues Ala43, 62-63 (ER), Gly70, Val134, and 162-164 (HVD) contribute to the NAD(+) site. Positions 164 and 179 each coordinate Fe cation. Position 229 (Met229) interacts with NAD(+). Glycine is bound at residue Arg239.

The protein belongs to the THI4 family. As to quaternary structure, homooctamer; tetramer of dimers. It depends on Fe(2+) as a cofactor.

The enzyme catalyses hydrogen sulfide + glycine + NAD(+) = ADP-5-ethyl-4-methylthiazole-2-carboxylate + nicotinamide + 3 H2O + H(+). It functions in the pathway cofactor biosynthesis; thiamine diphosphate biosynthesis. In terms of biological role, involved in the biosynthesis of the thiazole moiety of thiamine. Catalyzes the conversion of NAD and glycine to adenosine diphosphate 5-(2-hydroxyethyl)-4-methylthiazole-2-carboxylate (ADT), an adenylated thiazole intermediate, using free sulfide as a source of sulfur. The polypeptide is Thiamine thiazole synthase (Sulfolobus acidocaldarius (strain ATCC 33909 / DSM 639 / JCM 8929 / NBRC 15157 / NCIMB 11770)).